Here is a 501-residue protein sequence, read N- to C-terminus: Cytochrome P450 90A4 (501 aa).

A helical membrane pass occupies residues 2-22 (AAAALLLLAAAAAAVVVAMAL). Cysteine 446 contacts heme.

Belongs to the cytochrome P450 family. It depends on heme as a cofactor.

It is found in the membrane. The protein operates within plant hormone biosynthesis; brassinosteroid biosynthesis. Its function is as follows. Catalyzes the C23-alpha-hydroxylation step in brassinosteroid biosynthesis. Converts 6-deoxocathasterone to 6-deoxoteasterone in the late C6-oxidation pathway and cathasterone to teasterone (TE) in the early C6-oxidation pathway of brassinolide (BL) biosynthesis. This Oryza sativa subsp. indica (Rice) protein is Cytochrome P450 90A4.